A 493-amino-acid polypeptide reads, in one-letter code: Cytochrome P450 2E1 (493 aa).

298–303 contacts substrate; it reads FAGTET. Cys437 serves as a coordination point for heme.

It belongs to the cytochrome P450 family. In terms of assembly, interacts with chaperones HSP70 and HSP90; this interaction is required for initial targeting to mitochondria. It depends on heme as a cofactor.

Its subcellular location is the endoplasmic reticulum membrane. It is found in the microsome membrane. It localises to the mitochondrion inner membrane. It carries out the reaction an organic molecule + reduced [NADPH--hemoprotein reductase] + O2 = an alcohol + oxidized [NADPH--hemoprotein reductase] + H2O + H(+). It catalyses the reaction (5Z,8Z,11Z)-eicosatrienoate + reduced [NADPH--hemoprotein reductase] + O2 = 19-hydroxy-(5Z,8Z,11Z)-eicosatrienoate + oxidized [NADPH--hemoprotein reductase] + H2O + H(+). The enzyme catalyses (5Z,8Z,11Z,14Z,17Z)-eicosapentaenoate + reduced [NADPH--hemoprotein reductase] + O2 = 19-hydroxy-(5Z,8Z,11Z,14Z,17Z)-eicosapentaenoate + oxidized [NADPH--hemoprotein reductase] + H2O + H(+). The catalysed reaction is (4Z,7Z,10Z,13Z,16Z,19Z)-docosahexaenoate + reduced [NADPH--hemoprotein reductase] + O2 = 21-hydroxy-(4Z,7Z,10Z,13Z,16Z,19Z)-docosahexaenoate + oxidized [NADPH--hemoprotein reductase] + H2O + H(+). It carries out the reaction dodecanoate + reduced [NADPH--hemoprotein reductase] + O2 = 11-hydroxydodecanoate + oxidized [NADPH--hemoprotein reductase] + H2O + H(+). It catalyses the reaction tetradecanoate + reduced [NADPH--hemoprotein reductase] + O2 = 13-hydroxytetradecanoate + oxidized [NADPH--hemoprotein reductase] + H2O + H(+). The enzyme catalyses 4-nitrophenol + NADPH + O2 + H(+) = 4-nitrocatechol + NADP(+) + H2O. Its pathway is lipid metabolism; fatty acid metabolism. Its activity is regulated as follows. The omega-1 hydroxylase activity is stimulated by cytochrome b5. Its function is as follows. A cytochrome P450 monooxygenase involved in the metabolism of fatty acids. Mechanistically, uses molecular oxygen inserting one oxygen atom into a substrate, and reducing the second into a water molecule, with two electrons provided by NADPH via cytochrome P450 reductase (NADPH--hemoprotein reductase). Catalyzes the hydroxylation of carbon-hydrogen bonds. Hydroxylates fatty acids specifically at the omega-1 position displaying the highest catalytic activity for saturated fatty acids. May be involved in the oxidative metabolism of xenobiotics. The chain is Cytochrome P450 2E1 from Rattus norvegicus (Rat).